Consider the following 430-residue polypeptide: Aspartate aminotransferase, mitochondrial (430 aa).

The N-terminal 29 residues, 1 to 29, are a transit peptide targeting the mitochondrion; sequence MALLHSSRILSGMAAAFHPGLAAAASARA. Thr48 carries the post-translational modification Phosphothreonine. The residue at position 59 (Lys59) is an N6-acetyllysine. Residue Gly65 coordinates substrate. Lys73 is modified (N6-acetyllysine; alternate). Lys73 carries the N6-succinyllysine; alternate modification. Lys82 bears the N6-acetyllysine mark. Residue Lys90 is modified to N6-acetyllysine; alternate. Lys90 is modified (N6-succinyllysine; alternate). Tyr96 carries the 3'-nitrotyrosine; alternate modification. The residue at position 96 (Tyr96) is a Phosphotyrosine; alternate. N6-acetyllysine; alternate occurs at positions 107 and 122. N6-succinyllysine; alternate occurs at positions 107 and 122. Ser143 carries the post-translational modification Phosphoserine. Lys159 bears the N6-acetyllysine; alternate mark. Lys159 is subject to N6-succinyllysine; alternate. Trp162 is a substrate binding site. Residue Lys185 is modified to N6-acetyllysine; alternate. An N6-succinyllysine; alternate modification is found at Lys185. A substrate-binding site is contributed by Asn215. An N6-succinyllysine modification is found at Lys227. Lys234 is subject to N6-acetyllysine. Lys279 and Lys296 each carry N6-acetyllysine; alternate. Lys279 is subject to N6-(pyridoxal phosphate)lysine; alternate. The residue at position 296 (Lys296) is an N6-succinyllysine; alternate. Position 302 is an N6-acetyllysine (Lys302). An N6-acetyllysine; alternate modification is found at Lys309. N6-succinyllysine; alternate is present on Lys309. Arg313 carries the post-translational modification Asymmetric dimethylarginine. Lys338 carries the N6-acetyllysine; alternate modification. Lys338 bears the N6-succinyllysine; alternate mark. Residue Lys345 is modified to N6-acetyllysine. Lys363 carries the N6-acetyllysine; alternate modification. An N6-succinyllysine; alternate modification is found at Lys363. Lys364 and Lys387 each carry N6-acetyllysine. An N6-acetyllysine; alternate mark is found at Lys396 and Lys404. Residues Lys396 and Lys404 each carry the N6-succinyllysine; alternate modification. A substrate-binding site is contributed by Arg407.

The protein belongs to the class-I pyridoxal-phosphate-dependent aminotransferase family. In terms of assembly, homodimer. The cofactor is pyridoxal 5'-phosphate. Acetylation of Lys-296, Lys-345 and Lys-363 is observed in liver mitochondria from fasted mice but not from fed mice. As to expression, detected in brain (at protein level).

The protein localises to the mitochondrion matrix. It localises to the cell membrane. The catalysed reaction is L-aspartate + 2-oxoglutarate = oxaloacetate + L-glutamate. It catalyses the reaction L-kynurenine + 2-oxoglutarate = kynurenate + L-glutamate + H2O. Catalyzes the irreversible transamination of the L-tryptophan metabolite L-kynurenine to form kynurenic acid (KA). As a member of the malate-aspartate shuttle, it has a key role in the intracellular NAD(H) redox balance. Is important for metabolite exchange between mitochondria and cytosol, and for amino acid metabolism. Facilitates cellular uptake of long-chain free fatty acids. The protein is Aspartate aminotransferase, mitochondrial (Got2) of Mus musculus (Mouse).